Consider the following 536-residue polypeptide: Organic anion transporter 3 (536 aa).

Residues 1–11 (MTFSEILDRVG) are Cytoplasmic-facing. The residue at position 4 (S4) is a Phosphoserine. A helical membrane pass occupies residues 12–32 (SMGPFQYLHVTLLALPVLGIA). At 33-123 (NHNLLQIFTA…LVCSSNKLKE (91 aa)) the chain is on the extracellular side. N-linked (GlcNAc...) asparagine glycosylation is found at N81 and N86. Residues 124–144 (MAQSIFMAGILVGGPVIGELS) form a helical membrane-spanning segment. Topologically, residues 145-158 (DRFGRKPILTWSYL) are cytoplasmic. The helical transmembrane segment at 159 to 179 (MLAASGSGAAFSPSLPVYMIF) threads the bilayer. A topological domain (extracellular) is located at residue R180. A helical transmembrane segment spans residues 181–201 (FLCGCSISGISLSTVILNVEW). At 202-212 (VPTSMRAISST) the chain is on the cytoplasmic side. Residues 213 to 233 (SIGYCYTIGQFILSGLAYAIP) traverse the membrane as a helical segment. Residues 234-236 (QWR) are Extracellular-facing. A helical transmembrane segment spans residues 237–257 (WLQLTSSAPFFIFSLLSWWVP). Residues 258 to 327 (ESIRWLVLSG…FRVSILRRVT (70 aa)) lie on the Cytoplasmic side of the membrane. Residues 328–348 (FCLSLAWFSTGFAYYSLAMGV) form a helical membrane-spanning segment. Topologically, residues 349 to 354 (EEFGVN) are extracellular. Residues 355-375 (IYILQIIFGGVDIPAKFITIL) form a helical membrane-spanning segment. The Cytoplasmic segment spans residues 376-383 (SLSYLGRR). The chain crosses the membrane as a helical span at residues 384 to 404 (ITQSFLLLLAGGAILALIFVP). Over 405-411 (SEMQLLR) the chain is Extracellular. A helical membrane pass occupies residues 412–432 (TALAVFGKGCLSGSFSCLFLY). Residues 433–471 (TSELYPTVLRQTGMGISNVWARVGSMIAPLVKITGELQP) are Cytoplasmic-facing. A helical membrane pass occupies residues 472-492 (FIPNVIFGTTALLGGSAAFFL). Over 493-536 (LETLNRPLPETIEDIQNWHKQVQKTKQESEAEKASQIIPLKTGG) the chain is Extracellular. Residues 515-536 (QKTKQESEAEKASQIIPLKTGG) are disordered.

The protein belongs to the major facilitator (TC 2.A.1) superfamily. Organic cation transporter (TC 2.A.1.19) family. As to expression, expressed in the liver, brain, kidney, choroid plexus and weakly in the eye. Moderately expressed (at protein level) in the brain capillary endothelial cells (BCEC).

The protein resides in the basolateral cell membrane. It catalyses the reaction estrone 3-sulfate(out) + glutarate(in) = estrone 3-sulfate(in) + glutarate(out). The enzyme catalyses estrone 3-sulfate(in) + 2-oxoglutarate(out) = estrone 3-sulfate(out) + 2-oxoglutarate(in). It carries out the reaction glutarate(in) + 2-oxoglutarate(out) = glutarate(out) + 2-oxoglutarate(in). The catalysed reaction is urate(in) + 2-oxoglutarate(out) = urate(out) + 2-oxoglutarate(in). It catalyses the reaction taurocholate(out) + glutarate(in) = taurocholate(in) + glutarate(out). The enzyme catalyses dehydroepiandrosterone 3-sulfate(out) + glutarate(in) = dehydroepiandrosterone 3-sulfate(in) + glutarate(out). It carries out the reaction prostaglandin F2alpha(out) + glutarate(in) = prostaglandin F2alpha(in) + glutarate(out). The catalysed reaction is prostaglandin F2alpha(out) + 2-oxoglutarate(in) = prostaglandin F2alpha(in) + 2-oxoglutarate(out). It catalyses the reaction (R)-carnitine(out) + 2-oxoglutarate(in) = (R)-carnitine(in) + 2-oxoglutarate(out). The enzyme catalyses glutarate(in) + (R)-carnitine(out) = glutarate(out) + (R)-carnitine(in). It carries out the reaction prostaglandin E2(out) + 2-oxoglutarate(in) = prostaglandin E2(in) + 2-oxoglutarate(out). The catalysed reaction is prostaglandin E2(out) + glutarate(in) = prostaglandin E2(in) + glutarate(out). It catalyses the reaction urate(in) + glutarate(out) = urate(out) + glutarate(in). The enzyme catalyses taurocholate(out) + 2-oxoglutarate(in) = taurocholate(in) + 2-oxoglutarate(out). It carries out the reaction dehydroepiandrosterone 3-sulfate(out) + 2-oxoglutarate(in) = dehydroepiandrosterone 3-sulfate(in) + 2-oxoglutarate(out). The catalysed reaction is kynurenate(out) + a dicarboxylate(in) = kynurenate(in) + a dicarboxylate(out). It catalyses the reaction (indol-3-yl)acetate(out) + a dicarboxylate(in) = (indol-3-yl)acetate(in) + a dicarboxylate(out). The enzyme catalyses indoxyl sulfate(out) + a dicarboxylate(in) = indoxyl sulfate(in) + a dicarboxylate(out). It carries out the reaction N-benzoylglycine(out) + a dicarboxylate(in) = N-benzoylglycine(in) + a dicarboxylate(out). The catalysed reaction is 3-carboxy-4-methyl-5-propyl-2-furanpropanoate(out) + a dicarboxylate(in) = 3-carboxy-4-methyl-5-propyl-2-furanpropanoate(in) + a dicarboxylate(out). It catalyses the reaction (6R)-L-erythro-5,6,7,8-tetrahydrobiopterin(out) + a dicarboxylate(in) = (6R)-L-erythro-5,6,7,8-tetrahydrobiopterin(in) + a dicarboxylate(out). The enzyme catalyses L-erythro-7,8-dihydrobiopterin(out) + a dicarboxylate(in) = L-erythro-7,8-dihydrobiopterin(in) + a dicarboxylate(out). It carries out the reaction L-sepiapterin(out) + a dicarboxylate(in) = L-sepiapterin(in) + a dicarboxylate(out). Functionally, functions as an organic anion/dicarboxylate exchanger that couples organic anion uptake indirectly to the sodium gradient. Transports organic anions such as estrone 3-sulfate (E1S) and urate in exchange for dicarboxylates such as glutarate or ketoglutarate (2-oxoglutarate). Plays an important role in the excretion of endogenous and exogenous organic anions, especially from the kidney and the brain. E1S transport is pH- and chloride-dependent and may also involve E1S/cGMP exchange. Responsible for the transport of prostaglandin E2 (PGE2) and prostaglandin F2(alpha) (PGF2(alpha)) in the basolateral side of the renal tubule. Involved in the transport of neuroactive tryptophan metabolites kynurenate and xanthurenate. Functions as a biopterin transporters involved in the uptake and the secretion of coenzymes tetrahydrobiopterin (BH4), dihydrobiopterin (BH2) and sepiapterin to urine, thereby determining baseline levels of blood biopterins. May be involved in the basolateral transport of steviol, a metabolite of the popular sugar substitute stevioside. May participate in the detoxification/ renal excretion of drugs and xenobiotics, such as the histamine H(2)-receptor antagonists fexofenadine and cimetidine, the antibiotic benzylpenicillin (PCG), the anionic herbicide 2,4-dichloro-phenoxyacetate (2,4-D), the diagnostic agent p-aminohippurate (PAH), the antiviral acyclovir (ACV), and the mycotoxin ochratoxin (OTA), by transporting these exogenous organic anions across the cell membrane in exchange for dicarboxylates such as 2-oxoglutarate. Contributes to the renal uptake of potent uremic toxins (indoxyl sulfate (IS), indole acetate (IA), hippurate/N-benzoylglycine (HA) and 3-carboxy-4-methyl-5-propyl-2-furanpropionate (CMPF)), pravastatin, PCG, E1S and dehydroepiandrosterone sulfate (DHEAS), and is partly involved in the renal uptake of temocaprilat (an angiotensin-converting enzyme (ACE) inhibitor). May contribute to the release of cortisol in the adrenals. Involved in one of the detoxification systems on the choroid plexus (CP), removes substrates such as E1S or taurocholate (TC), PCG, 2,4-D and PAH, from the cerebrospinal fluid (CSF) to the blood for eventual excretion in urine and bile. Regulates the CSF concentration of histamine H(2)-receptor antagonists cimetidine and ranitidine at the CP. Also contributes to the uptake of several other organic compounds such as the prostanoids prostaglandin E(2) and prostaglandin F(2-alpha), L-carnitine, and the therapeutic drugs allopurinol, 6-mercaptopurine (6-MP) and 5-fluorouracil (5-FU). Mediates the uptake from brain of organic anions, such as E1S, PAH, and OTA. Mediates the transport of PAH, PCG, and the statins pravastatin and pitavastatin, from the cerebrum into the blood circulation across the blood-brain barrier (BBB). In summary, plays a role in the efflux of drugs and xenobiotics, helping reduce their undesired toxicological effects on the body. The sequence is that of Organic anion transporter 3 (Slc22a8) from Rattus norvegicus (Rat).